The chain runs to 120 residues: Large ribosomal subunit protein bL17 (120 aa).

Belongs to the bacterial ribosomal protein bL17 family. Part of the 50S ribosomal subunit. Contacts protein L32.

This chain is Large ribosomal subunit protein bL17, found in Halalkalibacterium halodurans (strain ATCC BAA-125 / DSM 18197 / FERM 7344 / JCM 9153 / C-125) (Bacillus halodurans).